The primary structure comprises 543 residues: Chaperonin GroEL 2 (543 aa).

ATP contacts are provided by residues 29 to 32, 86 to 90, G413, 477 to 479, and D493; these read TLGP, DGTTT, and DAA. A disordered region spans residues 523-543; the sequence is PQEPEPAAGGHGHGHQHGPGF. Positions 534–543 are enriched in basic residues; sequence GHGHQHGPGF.

This sequence belongs to the chaperonin (HSP60) family. As to quaternary structure, forms a cylinder of 14 subunits composed of two heptameric rings stacked back-to-back. Interacts with the co-chaperonin GroES.

It localises to the cytoplasm. It catalyses the reaction ATP + H2O + a folded polypeptide = ADP + phosphate + an unfolded polypeptide.. Its function is as follows. Together with its co-chaperonin GroES, plays an essential role in assisting protein folding. The GroEL-GroES system forms a nano-cage that allows encapsulation of the non-native substrate proteins and provides a physical environment optimized to promote and accelerate protein folding. The polypeptide is Chaperonin GroEL 2 (Salinispora tropica (strain ATCC BAA-916 / DSM 44818 / JCM 13857 / NBRC 105044 / CNB-440)).